The chain runs to 234 residues: Proteasome subunit alpha type-2 (234 aa).

A2 is modified (N-acetylalanine). Y6 carries the phosphotyrosine modification. Phosphoserine occurs at positions 7, 14, and 16. Residue Y24 is modified to Phosphotyrosine. Residue K70 is modified to N6-acetyllysine. 2 positions are modified to phosphotyrosine: Y76 and Y121. N6-acetyllysine is present on K171.

This sequence belongs to the peptidase T1A family. As to quaternary structure, the 26S proteasome consists of a 20S proteasome core and two 19S regulatory subunits. The 20S proteasome core is a barrel-shaped complex made of 28 subunits that are arranged in four stacked rings. The two outer rings are each formed by seven alpha subunits, and the two inner rings are formed by seven beta subunits. The proteolytic activity is exerted by three beta-subunits PSMB5, PSMB6 and PSMB7. Phosphorylated on tyrosine residues; which may be important for nuclear import. As to expression, detected in liver (at protein level).

Its subcellular location is the cytoplasm. The protein localises to the nucleus. In terms of biological role, component of the 20S core proteasome complex involved in the proteolytic degradation of most intracellular proteins. This complex plays numerous essential roles within the cell by associating with different regulatory particles. Associated with two 19S regulatory particles, forms the 26S proteasome and thus participates in the ATP-dependent degradation of ubiquitinated proteins. The 26S proteasome plays a key role in the maintenance of protein homeostasis by removing misfolded or damaged proteins that could impair cellular functions, and by removing proteins whose functions are no longer required. Associated with the PA200 or PA28, the 20S proteasome mediates ubiquitin-independent protein degradation. This type of proteolysis is required in several pathways including spermatogenesis (20S-PA200 complex) or generation of a subset of MHC class I-presented antigenic peptides (20S-PA28 complex). The sequence is that of Proteasome subunit alpha type-2 (Psma2) from Mus musculus (Mouse).